A 105-amino-acid chain; its full sequence is Small ribosomal subunit protein uS10c (105 aa).

It belongs to the universal ribosomal protein uS10 family. In terms of assembly, part of the 30S ribosomal subunit.

It localises to the plastid. It is found in the chloroplast. Functionally, involved in the binding of tRNA to the ribosomes. In Porphyra purpurea (Red seaweed), this protein is Small ribosomal subunit protein uS10c.